Consider the following 448-residue polypeptide: N-succinylarginine dihydrolase (448 aa).

Residues 19 to 28, asparagine 110, and 137 to 138 each bind substrate; these read AGLSYGNVAS and HR. The active site involves glutamate 174. Arginine 214 contributes to the substrate binding site. Histidine 250 is an active-site residue. Substrate contacts are provided by aspartate 252 and asparagine 364. The Nucleophile role is filled by cysteine 370.

It belongs to the succinylarginine dihydrolase family. As to quaternary structure, homodimer.

It carries out the reaction N(2)-succinyl-L-arginine + 2 H2O + 2 H(+) = N(2)-succinyl-L-ornithine + 2 NH4(+) + CO2. It functions in the pathway amino-acid degradation; L-arginine degradation via AST pathway; L-glutamate and succinate from L-arginine: step 2/5. Catalyzes the hydrolysis of N(2)-succinylarginine into N(2)-succinylornithine, ammonia and CO(2). In Pseudoalteromonas translucida (strain TAC 125), this protein is N-succinylarginine dihydrolase.